We begin with the raw amino-acid sequence, 298 residues long: Lipoyl synthase (298 aa).

Positions 40, 45, 51, 67, 71, 74, and 280 each coordinate [4Fe-4S] cluster. The region spanning 53–269 (AVRKTATFMI…KEIALSKGFS (217 aa)) is the Radical SAM core domain.

The protein belongs to the radical SAM superfamily. Lipoyl synthase family. Requires [4Fe-4S] cluster as cofactor.

It localises to the cytoplasm. It carries out the reaction [[Fe-S] cluster scaffold protein carrying a second [4Fe-4S](2+) cluster] + N(6)-octanoyl-L-lysyl-[protein] + 2 oxidized [2Fe-2S]-[ferredoxin] + 2 S-adenosyl-L-methionine + 4 H(+) = [[Fe-S] cluster scaffold protein] + N(6)-[(R)-dihydrolipoyl]-L-lysyl-[protein] + 4 Fe(3+) + 2 hydrogen sulfide + 2 5'-deoxyadenosine + 2 L-methionine + 2 reduced [2Fe-2S]-[ferredoxin]. It functions in the pathway protein modification; protein lipoylation via endogenous pathway; protein N(6)-(lipoyl)lysine from octanoyl-[acyl-carrier-protein]. Functionally, catalyzes the radical-mediated insertion of two sulfur atoms into the C-6 and C-8 positions of the octanoyl moiety bound to the lipoyl domains of lipoate-dependent enzymes, thereby converting the octanoylated domains into lipoylated derivatives. The protein is Lipoyl synthase of Bacillus cereus (strain G9842).